A 126-amino-acid polypeptide reads, in one-letter code: Late histone H2A.3, gonadal (126 aa).

Over residues Met-1 to Ser-18 the composition is skewed to basic residues. Residues Met-1–Ala-21 are disordered. At Ser-2 the chain carries N-acetylserine. Ser-2 is modified (phosphoserine). The residue at position 104 (Gln-104) is an N5-methylglutamine. Lys-119 is covalently cross-linked (Glycyl lysine isopeptide (Lys-Gly) (interchain with G-Cter in ubiquitin)).

The protein belongs to the histone H2A family. In terms of assembly, the nucleosome is a histone octamer containing two molecules each of H2A, H2B, H3 and H4 assembled in one H3-H4 heterotetramer and two H2A-H2B heterodimers. The octamer wraps approximately 147 bp of DNA. Monoubiquitination of Lys-119 gives a specific tag for epigenetic transcriptional repression. In terms of processing, phosphorylation of Ser-2 directly represses transcription.

It is found in the nucleus. Its subcellular location is the chromosome. Core component of nucleosome. Nucleosomes wrap and compact DNA into chromatin, limiting DNA accessibility to the cellular machineries which require DNA as a template. Histones thereby play a central role in transcription regulation, DNA repair, DNA replication and chromosomal stability. DNA accessibility is regulated via a complex set of post-translational modifications of histones, also called histone code, and nucleosome remodeling. This Psammechinus miliaris (Green sea urchin) protein is Late histone H2A.3, gonadal.